Reading from the N-terminus, the 195-residue chain is N-(5'-phosphoribosyl)anthranilate isomerase (195 aa).

This sequence belongs to the TrpF family.

It catalyses the reaction N-(5-phospho-beta-D-ribosyl)anthranilate = 1-(2-carboxyphenylamino)-1-deoxy-D-ribulose 5-phosphate. It functions in the pathway amino-acid biosynthesis; L-tryptophan biosynthesis; L-tryptophan from chorismate: step 3/5. In Streptococcus gordonii (strain Challis / ATCC 35105 / BCRC 15272 / CH1 / DL1 / V288), this protein is N-(5'-phosphoribosyl)anthranilate isomerase.